A 308-amino-acid chain; its full sequence is Pantothenate synthetase (308 aa).

Residue Met39 to His46 coordinates ATP. His46 functions as the Proton donor in the catalytic mechanism. Gln71 serves as a coordination point for (R)-pantoate. Gln71 contacts beta-alanine. Residue Gly157 to Asp160 coordinates ATP. A (R)-pantoate-binding site is contributed by Gln163. Residues Val186 and Met194–Arg197 each bind ATP. Positions Ile286–Asn308 are disordered.

The protein belongs to the pantothenate synthetase family. Homodimer.

It localises to the cytoplasm. The catalysed reaction is (R)-pantoate + beta-alanine + ATP = (R)-pantothenate + AMP + diphosphate + H(+). Its pathway is cofactor biosynthesis; (R)-pantothenate biosynthesis; (R)-pantothenate from (R)-pantoate and beta-alanine: step 1/1. Catalyzes the condensation of pantoate with beta-alanine in an ATP-dependent reaction via a pantoyl-adenylate intermediate. The protein is Pantothenate synthetase of Mycolicibacterium paratuberculosis (strain ATCC BAA-968 / K-10) (Mycobacterium paratuberculosis).